The primary structure comprises 233 residues: Purine nucleoside phosphorylase DeoD-type (233 aa).

Position 4 (histidine 4) interacts with a purine D-ribonucleoside. Phosphate contacts are provided by residues glycine 20, arginine 24, arginine 43, and 87-90; that span reads RIGT. A purine D-ribonucleoside contacts are provided by residues 179–181 and 203–204; these read EME and SD. The active-site Proton donor is the aspartate 204.

The protein belongs to the PNP/UDP phosphorylase family. Homohexamer; trimer of homodimers.

The enzyme catalyses a purine D-ribonucleoside + phosphate = a purine nucleobase + alpha-D-ribose 1-phosphate. The catalysed reaction is a purine 2'-deoxy-D-ribonucleoside + phosphate = a purine nucleobase + 2-deoxy-alpha-D-ribose 1-phosphate. Catalyzes the reversible phosphorolytic breakdown of the N-glycosidic bond in the beta-(deoxy)ribonucleoside molecules, with the formation of the corresponding free purine bases and pentose-1-phosphate. In Helicobacter pylori (strain HPAG1), this protein is Purine nucleoside phosphorylase DeoD-type.